A 43-amino-acid chain; its full sequence is Delta/kappa-actitoxin-Avd4a (43 aa).

Intrachain disulfides connect Cys4–Cys39, Cys6–Cys32, and Cys22–Cys40.

It belongs to the sea anemone type 3 (BDS) potassium channel toxin family.

It localises to the secreted. The protein resides in the nematocyst. Its function is as follows. Acts as a gating modifier on both Kv and Nav ion channels, and also acts on blood pressure. Voltage-dependently inhibits voltage-gated potassium channels Kv3 (Kv3.1/KCNC1, Kv3.2/KCNC2 and Kv3.4/KCNC4) and slows inactivation of the voltage-gated sodium channel Nav1.7/SCN9A. Inhibits all Kv3.1, Kv3.2 and Kv3.4 by about 50% when tested at a voltage of +40 mV (45%, 48% and 56%, respectively). May act by binding residues in voltage-sensing domains S3b and S4 of Kv3. On sodium channel, tests have been done on human Nav1.7/SCN9A (expressed in HEK293 cells) (EC(50)=3 nM) and rat SCG neurons that mostly carry Nav1.7 channels (EC(50)=300 nM). This toxin also reduces blood pressure. In Anemonia sulcata (Mediterranean snakelocks sea anemone), this protein is Delta/kappa-actitoxin-Avd4a.